The sequence spans 210 residues: Large ribosomal subunit protein uL3 (210 aa).

The tract at residues 131 to 154 (GPMSHGSKYHRRVGSMGATTDPGR) is disordered.

Belongs to the universal ribosomal protein uL3 family. In terms of assembly, part of the 50S ribosomal subunit. Forms a cluster with proteins L14 and L19.

Its function is as follows. One of the primary rRNA binding proteins, it binds directly near the 3'-end of the 23S rRNA, where it nucleates assembly of the 50S subunit. The protein is Large ribosomal subunit protein uL3 of Thermoanaerobacter pseudethanolicus (strain ATCC 33223 / 39E) (Clostridium thermohydrosulfuricum).